Consider the following 330-residue polypeptide: Phenylalanine--tRNA ligase alpha subunit (330 aa).

Mg(2+) is bound at residue E255.

This sequence belongs to the class-II aminoacyl-tRNA synthetase family. Phe-tRNA synthetase alpha subunit type 1 subfamily. As to quaternary structure, tetramer of two alpha and two beta subunits. Mg(2+) is required as a cofactor.

The protein resides in the cytoplasm. It catalyses the reaction tRNA(Phe) + L-phenylalanine + ATP = L-phenylalanyl-tRNA(Phe) + AMP + diphosphate + H(+). The protein is Phenylalanine--tRNA ligase alpha subunit of Acinetobacter baylyi (strain ATCC 33305 / BD413 / ADP1).